A 411-amino-acid polypeptide reads, in one-letter code: Putative ion-transport protein YfeO (411 aa).

11 helical membrane passes run 9–29 (MLLL…VLIA), 54–74 (DSPF…GLII), 99–119 (ALPG…SLGP), 149–169 (ILAS…AALI), 186–206 (LFAP…FFHP), 223–243 (IASG…AVWC), 258–278 (VLIL…GGPL), 296–316 (LGAG…VIAA), 322–342 (GGRI…LHAH), 343–363 (VEAV…VLVV), and 386–406 (LLCI…LLAA).

Belongs to the chloride channel (TC 2.A.49) family.

It localises to the cell membrane. The protein is Putative ion-transport protein YfeO of Salmonella agona (strain SL483).